Consider the following 123-residue polypeptide: Fluoride-specific ion channel FluC 2 (123 aa).

The next 3 helical transmembrane spans lie at 30–50 (FPLP…FVAG), 68–88 (VGFI…VLLL), and 93–113 (WPLA…AVWV). Na(+) is bound by residues glycine 72 and threonine 75.

This sequence belongs to the fluoride channel Fluc/FEX (TC 1.A.43) family.

It localises to the cell membrane. The catalysed reaction is fluoride(in) = fluoride(out). Its activity is regulated as follows. Na(+) is not transported, but it plays an essential structural role and its presence is essential for fluoride channel function. Fluoride-specific ion channel. Important for reducing fluoride concentration in the cell, thus reducing its toxicity. The sequence is that of Fluoride-specific ion channel FluC 2 from Symbiobacterium thermophilum (strain DSM 24528 / JCM 14929 / IAM 14863 / T).